The following is a 462-amino-acid chain: L-seryl-tRNA(Sec) selenium transferase (462 aa).

N6-(pyridoxal phosphate)lysine is present on Lys292.

It belongs to the SelA family. Requires pyridoxal 5'-phosphate as cofactor.

The protein resides in the cytoplasm. The enzyme catalyses L-seryl-tRNA(Sec) + selenophosphate + H(+) = L-selenocysteinyl-tRNA(Sec) + phosphate. It participates in aminoacyl-tRNA biosynthesis; selenocysteinyl-tRNA(Sec) biosynthesis; selenocysteinyl-tRNA(Sec) from L-seryl-tRNA(Sec) (bacterial route): step 1/1. Its function is as follows. Converts seryl-tRNA(Sec) to selenocysteinyl-tRNA(Sec) required for selenoprotein biosynthesis. The chain is L-seryl-tRNA(Sec) selenium transferase from Geobacter metallireducens (strain ATCC 53774 / DSM 7210 / GS-15).